A 191-amino-acid chain; its full sequence is Ion-translocating oxidoreductase complex subunit B (191 aa).

Positions 1 to 26 (MSAVLIAVLALLALCLLGGAILGFAA) are hydrophobic. The region spanning 32–90 (EGDPIAEQINALLPQTQCGQCGYPGCKPYAEAIAGGDKINKCPPGGEATIQALADLLDV) is the 4Fe-4S domain. Positions 49, 52, 57, 73, 114, 117, 120, 124, 144, 147, 150, and 154 each coordinate [4Fe-4S] cluster. 2 consecutive 4Fe-4S ferredoxin-type domains span residues 105–134 (MVAY…GAAR) and 135–164 (QMHT…MIEV).

The protein belongs to the 4Fe4S bacterial-type ferredoxin family. RnfB subfamily. In terms of assembly, the complex is composed of six subunits: RnfA, RnfB, RnfC, RnfD, RnfE and RnfG. [4Fe-4S] cluster is required as a cofactor.

It localises to the cell inner membrane. Part of a membrane-bound complex that couples electron transfer with translocation of ions across the membrane. In Stutzerimonas stutzeri (strain A1501) (Pseudomonas stutzeri), this protein is Ion-translocating oxidoreductase complex subunit B.